Reading from the N-terminus, the 54-residue chain is Large ribosomal subunit protein bL33A (54 aa).

Belongs to the bacterial ribosomal protein bL33 family.

The chain is Large ribosomal subunit protein bL33A from Mycolicibacterium paratuberculosis (strain ATCC BAA-968 / K-10) (Mycobacterium paratuberculosis).